The chain runs to 156 residues: S-ribosylhomocysteine lyase (156 aa).

Fe cation contacts are provided by H56, H60, and C123.

This sequence belongs to the LuxS family. In terms of assembly, homodimer. The cofactor is Fe cation.

It carries out the reaction S-(5-deoxy-D-ribos-5-yl)-L-homocysteine = (S)-4,5-dihydroxypentane-2,3-dione + L-homocysteine. Its function is as follows. Involved in the synthesis of autoinducer 2 (AI-2) which is secreted by bacteria and is used to communicate both the cell density and the metabolic potential of the environment. The regulation of gene expression in response to changes in cell density is called quorum sensing. Catalyzes the transformation of S-ribosylhomocysteine (RHC) to homocysteine (HC) and 4,5-dihydroxy-2,3-pentadione (DPD). The sequence is that of S-ribosylhomocysteine lyase from Staphylococcus saprophyticus subsp. saprophyticus (strain ATCC 15305 / DSM 20229 / NCIMB 8711 / NCTC 7292 / S-41).